The chain runs to 246 residues: Probable transcriptional regulatory protein WP1214 (246 aa).

Residues 1-22 (MAGHSQFSNIKHRKGAQDAKRS) are disordered.

Belongs to the TACO1 family.

It localises to the cytoplasm. The chain is Probable transcriptional regulatory protein WP1214 from Wolbachia pipientis subsp. Culex pipiens (strain wPip).